Consider the following 961-residue polypeptide: MTQKFEMADRFDASAVEQALYQHWEEQGYFKPSENPAVPSYCIAIPPPNVTGSLHMGHAFQQTLMDTLIRFNRMEGNNTLWQAGTDHAGIATQMVVERKIAAEEGKTRHDYGREAFINKIWDWKAYSGGTISQQMRRLGNSIDWQRERFTMDDGLSNAVKEVFVRLHEQGLIYRGKRLVNWDPKLHTAISDLEVENKESKGSLWHFRYPLSNGVKTADGKDYLIVATTRPETVLGDTAVAVHPEDERYQSLIGKTVLLPLANREIPIIADEYVDREFGTGVVKITPAHDFNDYEVGKRHALPMVNVMTMNADIRQTAEVLGPDGKPLNTYQAIIPADYQGLERFTARKKVVADFEALALLDEIKPHDLKVPYGDRGGVPIEPMLTDQWYVSVKPLAEVATKAVENGEIQFVPKQYENLYFSWMRDIQDWCISRQLWWGHRIPAWYDESGNVYVARTEAEVRIKHNLPLDLPLTQDEDVLDTWFSSGLWTFSTLGWPEQTKELKMFHTTDVLITGFDIIFFWVARMIMFTMHFIKDENGKPQVPFKTVYVTGLIRDEQGQKMSKSKGNVLDPIDMIDGISLADLLEKRTGNMMQPQLAEKIAKATRKEFAATPTLPAGGIAAHGTDALRFTLAALASNGRDINWDMKRLEGYRNFCNKLWNASRFVLTNDKLDLSAGEVEYSLADRWIESSFNRTVGEFREALTQYRFDLAANAIYEFTWNQFCDWYLELTKPVFANGSDAQKRATSKTLVSLLEKLLRLAHPIMPFITEEIWQKVKHFAGVEGDSIMLQPFPIVEQAKLDADAEQQINWLKELIIAVRNIRAEANIAPSKALDLLVRNVTQQQAVILSENQLLLTAMAKLTSISVLTAGEQAPLSVAKLVGQVEVLVPMAGFINKDTELARLSKEIDKLHNEVMRIESKLSNEAFVAKAPEAVISKERAKMAEYQSGIEKLQAQFKAIEAL.

The 'HIGH' region motif lies at Pro48–His58. The 'KMSKS' region motif lies at Lys560–Ser564. An ATP-binding site is contributed by Lys563. A coiled-coil region spans residues Phe892–Leu961.

It belongs to the class-I aminoacyl-tRNA synthetase family. ValS type 1 subfamily. In terms of assembly, monomer.

Its subcellular location is the cytoplasm. It carries out the reaction tRNA(Val) + L-valine + ATP = L-valyl-tRNA(Val) + AMP + diphosphate. Functionally, catalyzes the attachment of valine to tRNA(Val). As ValRS can inadvertently accommodate and process structurally similar amino acids such as threonine, to avoid such errors, it has a 'posttransfer' editing activity that hydrolyzes mischarged Thr-tRNA(Val) in a tRNA-dependent manner. The protein is Valine--tRNA ligase of Haemophilus ducreyi (strain 35000HP / ATCC 700724).